Reading from the N-terminus, the 48-residue chain is Photosystem II reaction center protein K (48 aa).

Residues 1 to 11 constitute a propeptide that is removed on maturation; sequence MFPSTNQEVLA. The chain crosses the membrane as a helical span at residues 23-43; sequence IVDVLPIIPLLFLLLAFVWQA.

The protein belongs to the PsbK family. In terms of assembly, PSII is composed of 1 copy each of membrane proteins PsbA, PsbB, PsbC, PsbD, PsbE, PsbF, PsbH, PsbI, PsbJ, PsbK, PsbL, PsbM, PsbT, PsbY, PsbZ, Psb30/Ycf12, at least 3 peripheral proteins of the oxygen-evolving complex and a large number of cofactors. It forms dimeric complexes.

The protein localises to the plastid. It localises to the chloroplast thylakoid membrane. Its function is as follows. One of the components of the core complex of photosystem II (PSII). PSII is a light-driven water:plastoquinone oxidoreductase that uses light energy to abstract electrons from H(2)O, generating O(2) and a proton gradient subsequently used for ATP formation. It consists of a core antenna complex that captures photons, and an electron transfer chain that converts photonic excitation into a charge separation. The polypeptide is Photosystem II reaction center protein K (Euglena sanguinea).